We begin with the raw amino-acid sequence, 332 residues long: Anthranilate phosphoribosyltransferase (332 aa).

5-phospho-alpha-D-ribose 1-diphosphate is bound by residues Gly-78, 81 to 82 (GD), Ser-86, 88 to 91 (NIST), 106 to 114 (KHGNKSITS), and Ser-118. Anthranilate is bound at residue Gly-78. Ser-90 is a Mg(2+) binding site. Residue Asn-109 coordinates anthranilate. Arg-163 contributes to the anthranilate binding site. Mg(2+)-binding residues include Asp-222 and Glu-223.

Belongs to the anthranilate phosphoribosyltransferase family. In terms of assembly, homodimer. It depends on Mg(2+) as a cofactor.

The catalysed reaction is N-(5-phospho-beta-D-ribosyl)anthranilate + diphosphate = 5-phospho-alpha-D-ribose 1-diphosphate + anthranilate. Its pathway is amino-acid biosynthesis; L-tryptophan biosynthesis; L-tryptophan from chorismate: step 2/5. Functionally, catalyzes the transfer of the phosphoribosyl group of 5-phosphorylribose-1-pyrophosphate (PRPP) to anthranilate to yield N-(5'-phosphoribosyl)-anthranilate (PRA). This chain is Anthranilate phosphoribosyltransferase, found in Staphylococcus aureus (strain USA300).